The sequence spans 961 residues: Glycine dehydrogenase (decarboxylating) (961 aa).

Position 709 is an N6-(pyridoxal phosphate)lysine (Lys709).

It belongs to the GcvP family. In terms of assembly, the glycine cleavage system is composed of four proteins: P, T, L and H. The cofactor is pyridoxal 5'-phosphate.

The catalysed reaction is N(6)-[(R)-lipoyl]-L-lysyl-[glycine-cleavage complex H protein] + glycine + H(+) = N(6)-[(R)-S(8)-aminomethyldihydrolipoyl]-L-lysyl-[glycine-cleavage complex H protein] + CO2. In terms of biological role, the glycine cleavage system catalyzes the degradation of glycine. The P protein binds the alpha-amino group of glycine through its pyridoxal phosphate cofactor; CO(2) is released and the remaining methylamine moiety is then transferred to the lipoamide cofactor of the H protein. This is Glycine dehydrogenase (decarboxylating) from Teredinibacter turnerae (strain ATCC 39867 / T7901).